We begin with the raw amino-acid sequence, 297 residues long: 4-diphosphocytidyl-2-C-methyl-D-erythritol kinase (297 aa).

Residue Lys6 is part of the active site. 94–104 is a binding site for ATP; that stretch reads PVAGGMAGGSA. The active site involves Asp136.

Belongs to the GHMP kinase family. IspE subfamily.

It catalyses the reaction 4-CDP-2-C-methyl-D-erythritol + ATP = 4-CDP-2-C-methyl-D-erythritol 2-phosphate + ADP + H(+). It functions in the pathway isoprenoid biosynthesis; isopentenyl diphosphate biosynthesis via DXP pathway; isopentenyl diphosphate from 1-deoxy-D-xylulose 5-phosphate: step 3/6. Functionally, catalyzes the phosphorylation of the position 2 hydroxy group of 4-diphosphocytidyl-2C-methyl-D-erythritol. The sequence is that of 4-diphosphocytidyl-2-C-methyl-D-erythritol kinase from Nocardioides sp. (strain ATCC BAA-499 / JS614).